Consider the following 469-residue polypeptide: tRNA (cytosine(72)-C(5))-methyltransferase NSUN6 (469 aa).

The 93-residue stretch at glutamine 111–tyrosine 203 folds into the PUA domain. Residues cysteine 242–lysine 248, aspartate 266, aspartate 293, and aspartate 323 each bind S-adenosyl-L-methionine. Residue cysteine 373 is the Nucleophile of the active site. Lysine 419 carries the post-translational modification N6-acetyllysine.

Belongs to the class I-like SAM-binding methyltransferase superfamily. RsmB/NOP family.

It is found in the cytoplasm. It carries out the reaction cytidine(72) in tRNA(Thr) + S-adenosyl-L-methionine = 5-methylcytidine(72) in tRNA(Thr) + S-adenosyl-L-homocysteine + H(+). The catalysed reaction is cytidine(72) in tRNA(Cys) + S-adenosyl-L-methionine = 5-methylcytidine(72) in tRNA(Cys) + S-adenosyl-L-homocysteine + H(+). S-adenosyl-L-methionine-dependent methyltransferase that specifically methylates the C5 position of cytosine 72 in tRNA(Thr)(TGT) and tRNA(Cys)(GCA). In vitro also methylates tRNA(Thr)(AGT). Methylation requires, in the acceptor stem region, the presence of the 3'-CCA terminus, the target site C72, the discriminator base U73, and the second and third base pairs (2:71 and 3:70) in the tRNA substrates. The polypeptide is tRNA (cytosine(72)-C(5))-methyltransferase NSUN6 (Homo sapiens (Human)).